The following is a 503-amino-acid chain: Transcriptional regulator LovE (503 aa).

Residues 35–67 constitute a DNA-binding region (zn(2)-C6 fungal-type); sequence CDRCHAQKIKCTGNKEVTGRAPCQRCQQAGLRC. Disordered regions lie at residues 89 to 124 and 331 to 358; these read ADPDPCLHMSSPPVPSQSLPLDVSESHSSNTSRQFL and SHMSPLEGSRSQSPSRDDTSSSSGHSSV. A compositionally biased stretch (low complexity) spans 339-357; the sequence is SRSQSPSRDDTSSSSGHSS.

The protein resides in the nucleus. In terms of biological role, transcription factor that regulates the expression of the he gene cluster that mediates the biosynthesis of lovastatin (also known as mevinolin, mevacor or monacolin K), a hypolipidemic inhibitor of (3S)-hydroxymethylglutaryl-coenzyme A (HMG-CoA) reductase (HMGR). The chain is Transcriptional regulator LovE from Aspergillus terreus.